Reading from the N-terminus, the 90-residue chain is Bombyxin B-5 (90 aa).

Positions 1-20 (MMKTAVMFILVVVISLTYSS) are cleaved as a signal peptide. Intrachain disulfides connect Cys30/Cys75, Cys42/Cys88, and Cys74/Cys79. A propeptide spans 49 to 64 (GGAQYAPYWQETYLRS) (c peptide like).

Belongs to the insulin family. Heterodimer of a B chain and an A chain linked by two disulfide bonds.

It localises to the secreted. In terms of biological role, brain peptide responsible for activation of prothoracic glands to produce ecdysone in insects. This Bombyx mori (Silk moth) protein is Bombyxin B-5 (BBXB5).